A 453-amino-acid chain; its full sequence is Jacalin-related lectin 40 (453 aa).

Jacalin-type lectin domains are found at residues 1–142, 154–296, and 306–449; these read MAQK…YFTT, HIKL…YFSS, and PEKL…YVVP. Ala2 is subject to N-acetylalanine.

The protein belongs to the jacalin lectin family. Expressed in roots.

In Arabidopsis thaliana (Mouse-ear cress), this protein is Jacalin-related lectin 40 (JAL40).